A 309-amino-acid chain; its full sequence is Serine/threonine-protein phosphatase 2A catalytic subunit beta isoform (309 aa).

Positions 57, 59, 85, and 117 each coordinate Mn(2+). His-118 acts as the Proton donor in catalysis. Residues His-167 and His-241 each contribute to the Mn(2+) site. Residue Tyr-307 is modified to Phosphotyrosine. Leu-309 is modified (leucine methyl ester).

The protein belongs to the PPP phosphatase family. PP-1 subfamily. In terms of assembly, found in a complex with at least ARL2, PPP2CB, PPP2R1A, PPP2R2A, PPP2R5E and TBCD. Interacts with TBCD. PP2A consists of a common heterodimeric core enzyme (composed of a 36 kDa catalytic subunit (subunit C) and a 65 kDa constant regulatory subunit (PR65) (subunit A)) that associates with a variety of regulatory subunits. Proteins that associate with the core dimer include three families of regulatory subunits B (the R2/B/PR55/B55, R3/B''/PR72/PR130/PR59 and R5/B'/B56 families), the 48 kDa variable regulatory subunit, viral proteins, and cell signaling molecules. Binds PPME1. May indirectly interact with SGO1, most probably through regulatory B56 subunits. Interacts with CTTNBP2NL. Interacts with PTPA. Part of the core of STRIPAK complexes composed of PP2A catalytic and scaffolding subunits, the striatins (PP2A regulatory subunits), the striatin-associated proteins MOB4, STRIP1 and STRIP2, PDCD10 and members of the STE20 kinases, such as STK24 and STK26. The cofactor is Mn(2+). Post-translationally, reversibly methyl esterified on Leu-309 by leucine carboxyl methyltransferase 1 (Lcmt1) and protein phosphatase methylesterase 1 (PPME1). Carboxyl methylation influences the affinity of the catalytic subunit for the different regulatory subunits, thereby modulating the PP2A holoenzyme's substrate specificity, enzyme activity and cellular localization. In terms of processing, phosphorylation of either threonine (by autophosphorylation-activated protein kinase) or tyrosine results in inactivation of the phosphatase. Auto-dephosphorylation has been suggested as a mechanism for reactivation. May be monoubiquitinated by NOSIP.

The protein resides in the cytoplasm. It localises to the nucleus. It is found in the chromosome. Its subcellular location is the centromere. The protein localises to the cytoskeleton. The protein resides in the spindle pole. The catalysed reaction is O-phospho-L-seryl-[protein] + H2O = L-seryl-[protein] + phosphate. It catalyses the reaction O-phospho-L-threonyl-[protein] + H2O = L-threonyl-[protein] + phosphate. Its function is as follows. Catalytic subunit of protein phosphatase 2A (PP2A), a serine/threonine phosphatase involved in the regulation of a wide variety of enzymes, signal transduction pathways, and cellular events. PP2A can modulate the activity of phosphorylase B kinase, casein kinase 2, mitogen-stimulated S6 kinase, and MAP-2 kinase. Part of the striatin-interacting phosphatase and kinase (STRIPAK) complexes. STRIPAK complexes have critical roles in protein (de)phosphorylation and are regulators of multiple signaling pathways including Hippo, MAPK, nuclear receptor and cytoskeleton remodeling. Different types of STRIPAK complexes are involved in a variety of biological processes such as cell growth, differentiation, apoptosis, metabolism and immune regulation. This chain is Serine/threonine-protein phosphatase 2A catalytic subunit beta isoform (PPP2CB), found in Oryctolagus cuniculus (Rabbit).